Consider the following 360-residue polypeptide: MTQTPIRLLIAASGTGGHLFPALAVAEQLLDYKIEWLGVPNRLEQTLVPQDYPLHTIAVEGFQTGFSLKSVKILLGLFSSVFQVRKLLRERKIDIVFTTGGYIASPAILAARLEGIPVILHESNYLPGKVTRFFSRWCQTVALGFEGSSQYFPNVETVWVSTPVRAQFLTPQPLDLPLEEDAFLIVVVGGSQGAVAVNQLVRQCALKWLEKGAYIVHLTGDRDPEADSFKHPHYFSLPFYENMAGLLQRANLAISRAGAGTLTELAITQTPAILIPYPYAAEDHQTYNGKVFADAGAAYLYSQKDLTPQLLEKVVLDLLNSPAKLQEMAEKTGKLAVADSAKRLADLVRNHTLLAEVSQK.

Residues 15 to 17 (TGG), asparagine 124, arginine 165, serine 191, and glutamine 285 contribute to the UDP-N-acetyl-alpha-D-glucosamine site.

The protein belongs to the glycosyltransferase 28 family. MurG subfamily.

It is found in the cell inner membrane. It carries out the reaction di-trans,octa-cis-undecaprenyl diphospho-N-acetyl-alpha-D-muramoyl-L-alanyl-D-glutamyl-meso-2,6-diaminopimeloyl-D-alanyl-D-alanine + UDP-N-acetyl-alpha-D-glucosamine = di-trans,octa-cis-undecaprenyl diphospho-[N-acetyl-alpha-D-glucosaminyl-(1-&gt;4)]-N-acetyl-alpha-D-muramoyl-L-alanyl-D-glutamyl-meso-2,6-diaminopimeloyl-D-alanyl-D-alanine + UDP + H(+). It participates in cell wall biogenesis; peptidoglycan biosynthesis. In terms of biological role, cell wall formation. Catalyzes the transfer of a GlcNAc subunit on undecaprenyl-pyrophosphoryl-MurNAc-pentapeptide (lipid intermediate I) to form undecaprenyl-pyrophosphoryl-MurNAc-(pentapeptide)GlcNAc (lipid intermediate II). The sequence is that of UDP-N-acetylglucosamine--N-acetylmuramyl-(pentapeptide) pyrophosphoryl-undecaprenol N-acetylglucosamine transferase from Gloeothece citriformis (strain PCC 7424) (Cyanothece sp. (strain PCC 7424)).